We begin with the raw amino-acid sequence, 214 residues long: ER lumen protein-retaining receptor 3 (214 aa).

At 1 to 4 (MNVF) the chain is on the lumenal side. A helical membrane pass occupies residues 5-24 (RILGDLSHLLAMILLLVKIW). Residues 25–32 (RSKSCAGI) lie on the Cytoplasmic side of the membrane. The chain crosses the membrane as a helical span at residues 33-52 (SGKSQILFALVFTTRYLDLF). Residues 47 to 48 (RY) form an interaction with the K-D-E-L motif on target proteins region. Residues 53–58 (SNFISI) are Lumenal-facing. Residues 59–79 (YNTVMKVVFLLCAYVTVYMIY) form a helical membrane-spanning segment. Residues 80–92 (WKFRKTFDIENDT) lie on the Cytoplasmic side of the membrane. The helical transmembrane segment at 93–110 (FRLEFLLVPVTGLSFLVN) threads the bilayer. Topologically, residues 111–116 (YSYTPM) are lumenal. Residues 117–135 (EVLWTFSIYLESVAILPQL) form a helical membrane-spanning segment. Residues 136–149 (FMISKTGEAETITT) lie on the Cytoplasmic side of the membrane. The chain crosses the membrane as a helical span at residues 150-168 (HYLFFLGLYRLLYLANWIR). The interval 159–169 (RLLYLANWIRR) is interaction with the K-D-E-L motif on target proteins. At 169–178 (RYQTENFYDQ) the chain is on the lumenal side. A helical transmembrane segment spans residues 179-199 (ISVVSGVVQTIFYCDFFYLYV). The Cytoplasmic portion of the chain corresponds to 200–214 (TKVLKGKKLSLPVPV). Residues 204–207 (KGKK) are important for recycling of cargo proteins with the sequence motif K-D-E-L from the Golgi to the endoplasmic reticulum.

The protein belongs to the ERD2 family.

The protein localises to the endoplasmic reticulum membrane. It localises to the golgi apparatus membrane. Its subcellular location is the cytoplasmic vesicle. It is found in the COPI-coated vesicle membrane. Receptor for the C-terminal sequence motif K-D-E-L that is present on endoplasmic reticulum resident proteins and that mediates their recycling from the Golgi back to the endoplasmic reticulum. The chain is ER lumen protein-retaining receptor 3 (Kdelr3) from Mus musculus (Mouse).